A 212-amino-acid chain; its full sequence is Deoxyribose-phosphate aldolase (212 aa).

The active-site Proton donor/acceptor is the aspartate 90. The active-site Schiff-base intermediate with acetaldehyde is lysine 151. Lysine 176 functions as the Proton donor/acceptor in the catalytic mechanism.

Belongs to the DeoC/FbaB aldolase family. DeoC type 1 subfamily.

The protein resides in the cytoplasm. The catalysed reaction is 2-deoxy-D-ribose 5-phosphate = D-glyceraldehyde 3-phosphate + acetaldehyde. The protein operates within carbohydrate degradation; 2-deoxy-D-ribose 1-phosphate degradation; D-glyceraldehyde 3-phosphate and acetaldehyde from 2-deoxy-alpha-D-ribose 1-phosphate: step 2/2. In terms of biological role, catalyzes a reversible aldol reaction between acetaldehyde and D-glyceraldehyde 3-phosphate to generate 2-deoxy-D-ribose 5-phosphate. This chain is Deoxyribose-phosphate aldolase, found in Halobacterium salinarum (strain ATCC 29341 / DSM 671 / R1).